A 279-amino-acid chain; its full sequence is Glutamate racemase (279 aa).

Substrate-binding positions include aspartate 13–serine 14 and tyrosine 45–glycine 46. The Proton donor/acceptor role is filled by cysteine 76. Asparagine 77–threonine 78 provides a ligand contact to substrate. The Proton donor/acceptor role is filled by cysteine 185. Threonine 186 to histidine 187 contacts substrate.

It belongs to the aspartate/glutamate racemases family.

It carries out the reaction L-glutamate = D-glutamate. It functions in the pathway cell wall biogenesis; peptidoglycan biosynthesis. Provides the (R)-glutamate required for cell wall biosynthesis. The chain is Glutamate racemase from Synechocystis sp. (strain ATCC 27184 / PCC 6803 / Kazusa).